Reading from the N-terminus, the 222-residue chain is Deoxyribose-phosphate aldolase (222 aa).

Aspartate 94 serves as the catalytic Proton donor/acceptor. Catalysis depends on lysine 156, which acts as the Schiff-base intermediate with acetaldehyde. Catalysis depends on lysine 185, which acts as the Proton donor/acceptor.

This sequence belongs to the DeoC/FbaB aldolase family. DeoC type 1 subfamily.

Its subcellular location is the cytoplasm. The enzyme catalyses 2-deoxy-D-ribose 5-phosphate = D-glyceraldehyde 3-phosphate + acetaldehyde. It functions in the pathway carbohydrate degradation; 2-deoxy-D-ribose 1-phosphate degradation; D-glyceraldehyde 3-phosphate and acetaldehyde from 2-deoxy-alpha-D-ribose 1-phosphate: step 2/2. Its function is as follows. Catalyzes a reversible aldol reaction between acetaldehyde and D-glyceraldehyde 3-phosphate to generate 2-deoxy-D-ribose 5-phosphate. This Malacoplasma penetrans (strain HF-2) (Mycoplasma penetrans) protein is Deoxyribose-phosphate aldolase.